We begin with the raw amino-acid sequence, 78 residues long: uncharacterized protein (78 aa).

This is an uncharacterized protein from Bacillus subtilis (strain 168).